Reading from the N-terminus, the 496-residue chain is Apolipoprotein N-acyltransferase (496 aa).

Helical transmembrane passes span 23-43, 50-70, 84-104, 126-146, 171-191, and 205-225; these read GIAT…FILW, LANF…LYEL, LIIS…LVYL, LTIK…ILSQ, WIGA…IYLI, and FLFG…TNPI. The 229-residue stretch at 236–464 folds into the CN hydrolase domain; it reads WQTNMPTREK…NDVVNPNFSI (229 aa). Glu-276 functions as the Proton acceptor in the catalytic mechanism. Lys-325 is an active-site residue. Catalysis depends on Cys-374, which acts as the Nucleophile. Residues 476–496 traverse the membrane as a helical segment; the sequence is PLFLLCLFLIGLNLYFGKFTN.

The protein belongs to the CN hydrolase family. Apolipoprotein N-acyltransferase subfamily.

It is found in the cell inner membrane. The enzyme catalyses N-terminal S-1,2-diacyl-sn-glyceryl-L-cysteinyl-[lipoprotein] + a glycerophospholipid = N-acyl-S-1,2-diacyl-sn-glyceryl-L-cysteinyl-[lipoprotein] + a 2-acyl-sn-glycero-3-phospholipid + H(+). It participates in protein modification; lipoprotein biosynthesis (N-acyl transfer). In terms of biological role, catalyzes the phospholipid dependent N-acylation of the N-terminal cysteine of apolipoprotein, the last step in lipoprotein maturation. The sequence is that of Apolipoprotein N-acyltransferase from Prochlorococcus marinus subsp. pastoris (strain CCMP1986 / NIES-2087 / MED4).